The following is a 501-amino-acid chain: Probable malate:quinone oxidoreductase (501 aa).

This sequence belongs to the MQO family. It depends on FAD as a cofactor.

The catalysed reaction is (S)-malate + a quinone = a quinol + oxaloacetate. The protein operates within carbohydrate metabolism; tricarboxylic acid cycle; oxaloacetate from (S)-malate (quinone route): step 1/1. This is Probable malate:quinone oxidoreductase from Mycolicibacterium paratuberculosis (strain ATCC BAA-968 / K-10) (Mycobacterium paratuberculosis).